Reading from the N-terminus, the 314-residue chain is 4-hydroxy-3-methylbut-2-enyl diphosphate reductase (314 aa).

C12 lines the [4Fe-4S] cluster pocket. Residues H43 and H81 each coordinate (2E)-4-hydroxy-3-methylbut-2-enyl diphosphate. Residues H43 and H81 each contribute to the dimethylallyl diphosphate site. Residues H43 and H81 each contribute to the isopentenyl diphosphate site. C103 is a [4Fe-4S] cluster binding site. Residue H131 participates in (2E)-4-hydroxy-3-methylbut-2-enyl diphosphate binding. H131 serves as a coordination point for dimethylallyl diphosphate. An isopentenyl diphosphate-binding site is contributed by H131. Residue E133 is the Proton donor of the active site. T170 is a binding site for (2E)-4-hydroxy-3-methylbut-2-enyl diphosphate. C198 is a binding site for [4Fe-4S] cluster. Positions 226, 228, and 271 each coordinate (2E)-4-hydroxy-3-methylbut-2-enyl diphosphate. 3 residues coordinate dimethylallyl diphosphate: S226, N228, and S271. The isopentenyl diphosphate site is built by S226, N228, and S271.

The protein belongs to the IspH family. [4Fe-4S] cluster is required as a cofactor.

It catalyses the reaction isopentenyl diphosphate + 2 oxidized [2Fe-2S]-[ferredoxin] + H2O = (2E)-4-hydroxy-3-methylbut-2-enyl diphosphate + 2 reduced [2Fe-2S]-[ferredoxin] + 2 H(+). It carries out the reaction dimethylallyl diphosphate + 2 oxidized [2Fe-2S]-[ferredoxin] + H2O = (2E)-4-hydroxy-3-methylbut-2-enyl diphosphate + 2 reduced [2Fe-2S]-[ferredoxin] + 2 H(+). It participates in isoprenoid biosynthesis; dimethylallyl diphosphate biosynthesis; dimethylallyl diphosphate from (2E)-4-hydroxy-3-methylbutenyl diphosphate: step 1/1. The protein operates within isoprenoid biosynthesis; isopentenyl diphosphate biosynthesis via DXP pathway; isopentenyl diphosphate from 1-deoxy-D-xylulose 5-phosphate: step 6/6. In terms of biological role, catalyzes the conversion of 1-hydroxy-2-methyl-2-(E)-butenyl 4-diphosphate (HMBPP) into a mixture of isopentenyl diphosphate (IPP) and dimethylallyl diphosphate (DMAPP). Acts in the terminal step of the DOXP/MEP pathway for isoprenoid precursor biosynthesis. The sequence is that of 4-hydroxy-3-methylbut-2-enyl diphosphate reductase from Bacillus pumilus (strain SAFR-032).